We begin with the raw amino-acid sequence, 912 residues long: WD repeat-containing protein 44 (912 aa).

3 disordered regions span residues 206-352 (DIIE…ELTD), 399-426 (SNDA…LKQK), and 460-481 (RDEV…GMPY). The span at 236–258 (NRPPQPINAPPPRPPPPARPAPP) shows a compositional bias: pro residues. A compositionally biased stretch (basic and acidic residues) spans 264–278 (GDTDFDRSSGFEYQK). A compositionally biased stretch (polar residues) spans 288–311 (SPNTLTENMNRDSQPSLDLASATS). Basic and acidic residues predominate over residues 410-422 (KPQSHQSETDGGK). The segment covering 469–478 (DDPSSSDDEG) has biased composition (acidic residues). Residues 511–550 (EHVGAVWTMKFSHCGRLLASAGQDNVVRIWVLKNAFDYFN) form a WD 1 repeat. Positions 559–594 (EGRVSPSPSQESLNSSKSDTDGGVFSGTDDVDPDDK) are disordered. Residues 563–575 (SPSPSQESLNSSK) show a composition bias toward low complexity. WD repeat units follow at residues 608–646 (GHTA…CLCC), 648–688 (QHID…VALW), 693–732 (GQTK…YHTQ), 743–782 (RVGR…LSMK), 787–826 (VNSS…SKFT), 841–880 (AHNA…ENIP), and 882–912 (GALK…KNIS). A disordered region spans residues 861–882 (AETSSEKQEGDQAEPVENIPSG).

The protein localises to the cytoplasm. It is found in the cytosol. It localises to the perinuclear region. The protein resides in the endosome membrane. Its subcellular location is the golgi apparatus. The protein localises to the trans-Golgi network. Functionally, downstream effector for rab11. May be involved in vesicle recycling. May also be involved in the inhibition of the intracellular ciliogenesis pathway. The sequence is that of WD repeat-containing protein 44 (wdr44) from Xenopus laevis (African clawed frog).